A 176-amino-acid chain; its full sequence is MDTERIGVGKIIGTHGIRGEVKVFPLTDFPERFRPGTRLILEQEGADGREGRTFPVTVISVRPGKGNLILKLAEINDADQAGAVRGATLKVEPWEVEPLPEGHYYIYQLLGSRVYTTGGEFLGILRDILATGANDVYVVRNEDAGEILIPALKTVVRQVDLARKEIRVELPPGLRD.

Positions E101–L174 constitute a PRC barrel domain.

This sequence belongs to the RimM family. As to quaternary structure, binds ribosomal protein uS19.

It is found in the cytoplasm. Functionally, an accessory protein needed during the final step in the assembly of 30S ribosomal subunit, possibly for assembly of the head region. Essential for efficient processing of 16S rRNA. May be needed both before and after RbfA during the maturation of 16S rRNA. It has affinity for free ribosomal 30S subunits but not for 70S ribosomes. The protein is Ribosome maturation factor RimM of Moorella thermoacetica (strain ATCC 39073 / JCM 9320).